The following is a 468-amino-acid chain: 6-phospho-beta-galactosidase (468 aa).

5 residues coordinate D-galactose 6-phosphate: Gln19, His116, Asn159, Glu160, and Asn297. The Proton donor role is filled by Glu160. Glu375 (nucleophile) is an active-site residue. Residues Ser428, Trp429, Lys435, and Tyr437 each contribute to the D-galactose 6-phosphate site.

This sequence belongs to the glycosyl hydrolase 1 family.

The enzyme catalyses a 6-phospho-beta-D-galactoside + H2O = D-galactose 6-phosphate + an alcohol. It participates in carbohydrate metabolism; lactose degradation; D-galactose 6-phosphate and beta-D-glucose from lactose 6-phosphate: step 1/1. The chain is 6-phospho-beta-galactosidase from Streptococcus gordonii (strain Challis / ATCC 35105 / BCRC 15272 / CH1 / DL1 / V288).